A 106-amino-acid chain; its full sequence is UPF0473 protein SSU98_0068 (106 aa).

This sequence belongs to the UPF0473 family.

This chain is UPF0473 protein SSU98_0068, found in Streptococcus suis (strain 98HAH33).